Consider the following 514-residue polypeptide: Peptide chain release factor 3 (514 aa).

The tr-type G domain maps to 8–268; the sequence is KKRRTFAIIS…IFLKFAPEPH (261 aa). GTP-binding positions include 17–24, 85–89, and 139–142; these read SHPDAGKT, DTPGH, and NKLD.

This sequence belongs to the TRAFAC class translation factor GTPase superfamily. Classic translation factor GTPase family. PrfC subfamily.

The protein localises to the cytoplasm. Its function is as follows. Increases the formation of ribosomal termination complexes and stimulates activities of RF-1 and RF-2. It binds guanine nucleotides and has strong preference for UGA stop codons. It may interact directly with the ribosome. The stimulation of RF-1 and RF-2 is significantly reduced by GTP and GDP, but not by GMP. The chain is Peptide chain release factor 3 from Streptococcus pneumoniae (strain P1031).